We begin with the raw amino-acid sequence, 177 residues long: MAVTYWTGENLTLRAIQPEDIVIFDSLDDEILRNMDSLHFPRSANNMREWVEEQLEKDEFRFIAVESDNNIVGMIETFDCDRKNGTFGYYLAVFEPYRGKGFAKEMILMVLRFFFLELAYQKVNTTVYSFNNPSIRLHEKLGFMKEGQLRKIIFTKGAYYDGICFGMTREEFELNHG.

Residues leucine 11–glutamate 170 enclose the N-acetyltransferase domain.

This sequence belongs to the acetyltransferase family.

In Bacillus subtilis (strain 168), this protein is SPbeta prophage-derived uncharacterized N-acetyltransferase YokL (yokL).